A 342-amino-acid chain; its full sequence is Protein BASIC PENTACYSTEINE6 (342 aa).

Residues 41 to 67 (AIQERNLAISEKKAAVAERDMAFLQRD) are a coiled coil. The segment at 41–76 (AIQERNLAISEKKAAVAERDMAFLQRDTAIAERNNA) is alanine-zipper. Residues 143 to 199 (REMEPNDGLPTSPPAGSTLESAKPKRGKRVNPKATTQTAANKRGPKNQRKVKKESED) form a disordered region. The tract at residues 164 to 195 (AKPKRGKRVNPKATTQTAANKRGPKNQRKVKK) is required for nucleus and nucleolus localization. The span at 185-194 (RGPKNQRKVK) shows a compositional bias: basic residues. A Nuclear localization signal motif is present at residues 192–195 (KVKK).

Belongs to the BBR/BPC family. As to quaternary structure, homodimer. Heterodimer with BPC4. As to expression, expressed in seedlings, leaves and pistils. Detected in the base of flowers and tips of carpels, in sepal vasculature, in young rosette, in the lateral and tip of primary roots, and in ovule at the exception of the outer integument.

The protein localises to the nucleus. It is found in the nucleolus. Its function is as follows. Transcriptional regulator that specifically binds to GA-rich elements (GAGA-repeats) present in regulatory sequences of genes involved in developmental processes. This is Protein BASIC PENTACYSTEINE6 (BPC6) from Arabidopsis thaliana (Mouse-ear cress).